Here is a 214-residue protein sequence, read N- to C-terminus: Metalloproteinase inhibitor 3 (214 aa).

Residues 1–26 (MVFSTTAALSLLLALSSMQLSEVSEA) form the signal peptide. Residue C27 participates in Zn(2+) binding. 2 involved in metalloproteinase-binding regions span residues 27-30 (CTCM) and 91-92 (ES). Intrachain disulfides connect C27/C94, C29/C121, C39/C146, C148/C195, C153/C158, and C166/C187. In terms of domain architecture, NTR spans 27–146 (CTCMPNHPQE…GLNHRYQYGC (120 aa)). N210 carries N-linked (GlcNAc...) asparagine glycosylation.

This sequence belongs to the protease inhibitor I35 (TIMP) family. As to expression, expressed abundantly in brain and cartilage.

The protein localises to the secreted. Its subcellular location is the extracellular space. It localises to the extracellular matrix. Its function is as follows. Complexes with metalloproteinases (such as collagenases) and irreversibly inactivates them by binding to their catalytic zinc cofactor. May form part of a tissue-specific acute response to remodeling stimuli. The chain is Metalloproteinase inhibitor 3 (TIMP3) from Scyliorhinus torazame (Cloudy catshark).